The primary structure comprises 2999 residues: TPR and ankyrin repeat-containing protein 1 (2999 aa).

The interval 1-87 (MASTTAGRRW…QPRGSTDSAC (87 aa)) is disordered. Low complexity predominate over residues 19–36 (RGPTPRSRAPGAKLSAPE). 2 TPR repeats span residues 144-177 (AMLL…DPTY) and 179-211 (KGYY…LQRS). 6 ANK repeats span residues 297 to 327 (EKYV…NIET), 328 to 361 (IGPN…EWKE), 369 to 405 (AGCT…DPTL), 538 to 567 (SQDR…DPRS), 572 to 593 (EGDT…DIGF), and 621 to 654 (NGNT…NFNL). 4 disordered regions span residues 684-722 (RRKN…LPCG), 773-831 (MPLP…GASQ), 1151-1211 (LEVE…GCVP), and 1318-1344 (WEED…QTGD). Composition is skewed to polar residues over residues 699 to 717 (SRSS…TSFK) and 801 to 815 (TQRM…NNPV). Residues 1151-1164 (LEVEPGKEGPGREE) show a composition bias toward basic and acidic residues. The segment covering 1318–1327 (WEEDDEEVEA) has biased composition (acidic residues). TPR repeat units lie at residues 1772–1805 (PYEW…EKEK) and 1866–1899 (LGKI…DLAL).

Expressed only in the brain. Detected in the hippocampus, hypothalamus and cingulate gyrus.

This Mus musculus (Mouse) protein is TPR and ankyrin repeat-containing protein 1 (Trank1).